A 772-amino-acid polypeptide reads, in one-letter code: RNA exonuclease 5 (772 aa).

Residues 1 to 10 (MEPEREGTER) show a composition bias toward basic and acidic residues. The interval 1–26 (MEPEREGTERHPRKVRKRRQAPNKLV) is disordered. Basic residues predominate over residues 11 to 21 (HPRKVRKRRQA). The Exonuclease domain maps to 228–376 (LFGLDCEMCL…EDARIILELA (149 aa)). 2 consecutive RRM domains span residues 505–579 (STVY…RPVT) and 600–679 (GSIY…RHLH).

This chain is RNA exonuclease 5 (REXO5), found in Macaca fascicularis (Crab-eating macaque).